The sequence spans 468 residues: 6-phospho-beta-galactosidase (468 aa).

Residues Gln-19, His-116, Asn-159, Glu-160, and Asn-297 each coordinate D-galactose 6-phosphate. The active-site Proton donor is the Glu-160. The active-site Nucleophile is Glu-375. Residues Ser-428, Trp-429, Lys-435, and Tyr-437 each coordinate D-galactose 6-phosphate.

Belongs to the glycosyl hydrolase 1 family.

The enzyme catalyses a 6-phospho-beta-D-galactoside + H2O = D-galactose 6-phosphate + an alcohol. The protein operates within carbohydrate metabolism; lactose degradation; D-galactose 6-phosphate and beta-D-glucose from lactose 6-phosphate: step 1/1. The polypeptide is 6-phospho-beta-galactosidase (Streptococcus uberis (strain ATCC BAA-854 / 0140J)).